We begin with the raw amino-acid sequence, 565 residues long: MSQSNLQRSMPIVTLPDLFDARFDNRFVRQLPGDPETRNVPRQVRNAGYTQVSPTPVRSPRLLAWADEVGEMLGIARPASPVSPAVEVLAGNRILPSMQPYAARYGGHQFGHWAGQLGDGRAITLGELISPNDKRYELQLKGAGKTPYSRTADGRAVLRSSVREFLCSEAMHSLGVPTTRALSLVATGEAVIRDMFYDGHPGAEPGAIVCRVSPSFLRFGNFEILAAQKEPELLRQLADFVIGEHFPELASSHRPPEVYAKWFEEVCRRTGILVAHWMRVGFVHGVMNTDNMSILGLTIDYGPYGWLEGFDLHWTPNTTDAQGRRYCYGNQPKIAQWNLTRLAGALTPLIEDDAALEHGLAVFGETFNNTWSGMLAAKLGLASLEHSDDDSLLSDLFETLQQVETDMTLFFRCLMNIPLNPISGNRATTFPAPENLESVDQMNDHGLVELFRPAFYDAHQAFSHAHLTRLAGWLRRYIARVRQEGEPEGLRYHRMSRANPKYVLRNYLAQQAIEALERGDDSVIIRLMEMLKHPYDEQPEHEDLAARRPEWARNKPGCSALSCSS.

Residues G118, G120, R121, K141, D153, G154, R211, and R218 each coordinate ATP. D290 serves as the catalytic Proton acceptor. The Mg(2+) site is built by N291 and D300. D300 is an ATP binding site.

It belongs to the SELO family. It depends on Mg(2+) as a cofactor. Requires Mn(2+) as cofactor.

It carries out the reaction L-seryl-[protein] + ATP = 3-O-(5'-adenylyl)-L-seryl-[protein] + diphosphate. The catalysed reaction is L-threonyl-[protein] + ATP = 3-O-(5'-adenylyl)-L-threonyl-[protein] + diphosphate. It catalyses the reaction L-tyrosyl-[protein] + ATP = O-(5'-adenylyl)-L-tyrosyl-[protein] + diphosphate. The enzyme catalyses L-histidyl-[protein] + UTP = N(tele)-(5'-uridylyl)-L-histidyl-[protein] + diphosphate. It carries out the reaction L-seryl-[protein] + UTP = O-(5'-uridylyl)-L-seryl-[protein] + diphosphate. The catalysed reaction is L-tyrosyl-[protein] + UTP = O-(5'-uridylyl)-L-tyrosyl-[protein] + diphosphate. Its function is as follows. Nucleotidyltransferase involved in the post-translational modification of proteins. It can catalyze the addition of adenosine monophosphate (AMP) or uridine monophosphate (UMP) to a protein, resulting in modifications known as AMPylation and UMPylation. This is Protein nucleotidyltransferase YdiU from Nitrosospira multiformis (strain ATCC 25196 / NCIMB 11849 / C 71).